The sequence spans 308 residues: Protein doublecortin (308 aa).

The 84-residue stretch at 21–104 (ARVILFRNGD…AEPLNTEVIP (84 aa)) folds into the Doublecortin 1 domain. The interval 115–167 (EVSDQDDEPKPSKPFVSSVPPPPTPTPTSSSGTTTTSQPTLSASPSVSSAQSP) is disordered. Over residues 141-167 (PTSSSGTTTTSQPTLSASPSVSSAQSP) the composition is skewed to low complexity. The Doublecortin 2 domain occupies 194–277 (KVIMCFRNGD…GETLNPLDFS (84 aa)). The interval 282 to 308 (EHVKQKKLQEQQQQASEQQKPQEQEIF) is disordered. The segment covering 291–300 (EQQQQASEQQ) has biased composition (low complexity).

In terms of assembly, interacts with lis1.

The protein resides in the cytoplasm. Its subcellular location is the cytoskeleton. Functionally, has a cytoskeleton-independent function in chemotactic signaling during development. This Dictyostelium discoideum (Social amoeba) protein is Protein doublecortin (dcx).